A 753-amino-acid polypeptide reads, in one-letter code: Polyadenylate-binding protein, cytoplasmic and nuclear (753 aa).

Polar residues predominate over residues Met1–Ala26. The interval Met1 to Ala52 is disordered. Over residues Ser37–Ala52 the composition is skewed to low complexity. RRM domains follow at residues Ala52 to Arg130, Gly140 to Ser217, Thr233 to Lys310, and Val336 to Arg460. Disordered regions lie at residues Val367–Lys417 and Met602–Val645. Basic and acidic residues predominate over residues Glu379–Lys417. A compositionally biased stretch (gly residues) spans Gly605 to Gly631. The 78-residue stretch at Thr648–Lys725 folds into the PABC domain. Residues Gly728–Ser753 are disordered. Positions Ala737–Ser753 are enriched in basic and acidic residues.

The protein belongs to the polyadenylate-binding protein type-1 family.

It is found in the cytoplasm. Its subcellular location is the nucleus. Binds the poly(A) tail of mRNA. Appears to be an important mediator of the multiple roles of the poly(A) tail in mRNA biogenesis, stability and translation. In the nucleus, involved in both mRNA cleavage and polyadenylation. Is also required for efficient mRNA export to the cytoplasm. Acts in concert with a poly(A)-specific nuclease (PAN) to affect poly(A) tail shortening, which may occur concomitantly with either nucleocytoplasmic mRNA transport or translational initiation. In the cytoplasm, stimulates translation initiation and regulates mRNA decay through translation termination-coupled poly(A) shortening, probably mediated by PAN. The chain is Polyadenylate-binding protein, cytoplasmic and nuclear (pab1) from Aspergillus fumigatus (strain ATCC MYA-4609 / CBS 101355 / FGSC A1100 / Af293) (Neosartorya fumigata).